Reading from the N-terminus, the 599-residue chain is Dictomallein-2 (599 aa).

Residues 1 to 20 (MKLILIYLILVFNLFNFINC) form the signal peptide. Residues 145–407 (PDVGQDYTLK…QNYFKNSIYY (263 aa)) enclose the Peptidase M66 domain. Histidine 298 lines the Zn(2+) pocket. The active site involves glutamate 299. Zn(2+) is bound by residues histidine 302 and histidine 308.

Belongs to the dictomallein family. Zn(2+) serves as cofactor.

The protein localises to the secreted. The chain is Dictomallein-2 (dtmlB) from Dictyostelium discoideum (Social amoeba).